Reading from the N-terminus, the 186-residue chain is UPF0301 protein HI_0304 (186 aa).

It belongs to the UPF0301 (AlgH) family.

The sequence is that of UPF0301 protein HI_0304 from Haemophilus influenzae (strain ATCC 51907 / DSM 11121 / KW20 / Rd).